The following is a 196-amino-acid chain: Putative NADH dehydrogenase/NAD(P)H nitroreductase Reut_A1586 (196 aa).

The protein belongs to the nitroreductase family. HadB/RutE subfamily. The cofactor is FMN.

The sequence is that of Putative NADH dehydrogenase/NAD(P)H nitroreductase Reut_A1586 from Cupriavidus pinatubonensis (strain JMP 134 / LMG 1197) (Cupriavidus necator (strain JMP 134)).